A 196-amino-acid chain; its full sequence is SPRY domain-containing protein 7 (196 aa).

Position 2 is an N-acetylalanine (A2). The B30.2/SPRY domain maps to 2–184 (AASVFCCLRC…FSEFYHTPPP (183 aa)).

The chain is SPRY domain-containing protein 7 (SPRYD7) from Bos taurus (Bovine).